The chain runs to 196 residues: DnaA initiator-associating protein DiaA (196 aa).

An SIS domain is found at 34-196 (MVQSLLNGNK…DNTLFPHQDD (163 aa)).

This sequence belongs to the SIS family. DiaA subfamily. As to quaternary structure, homotetramer; dimer of dimers.

Required for the timely initiation of chromosomal replication via direct interactions with the DnaA initiator protein. In Photorhabdus laumondii subsp. laumondii (strain DSM 15139 / CIP 105565 / TT01) (Photorhabdus luminescens subsp. laumondii), this protein is DnaA initiator-associating protein DiaA.